An 85-amino-acid polypeptide reads, in one-letter code: Conotoxin Lt28.3 (85 aa).

Residues M1–A21 form the signal peptide. A propeptide spanning residues V22–K40 is cleaved from the precursor.

It belongs to the conotoxin D superfamily. Post-translationally, contains 5 disulfide bonds. Expressed by the venom duct.

It localises to the secreted. Probable neurotoxin. This chain is Conotoxin Lt28.3, found in Conus litteratus (Lettered cone).